The chain runs to 185 residues: Pro-adrenomedullin (185 aa).

An N-terminal signal peptide occupies residues 1-21 (MKLVSVALMYLGSLAFLGADT). Position 41 is an arginine amide (Arg-41). The propeptide occupies 45 to 92 (ELRMSSSYPTGLADVKAGPAQTLIRPQDMKGASRSPEDSSPDAARIRV). The tract at residues 60–87 (KAGPAQTLIRPQDMKGASRSPEDSSPDA) is disordered. The cysteines at positions 110 and 115 are disulfide-linked. Positions 133-185 (DNVAPRSKISPQGYGRRRRRSLPEAGPGRTLVSSKPQAHGAPAPPSGSAPHFL) are disordered. Tyrosine amide is present on Tyr-146. Residues 148–185 (RRRRRSLPEAGPGRTLVSSKPQAHGAPAPPSGSAPHFL) constitute a propeptide, preproAM C-terminal fragment.

It belongs to the adrenomedullin family. In terms of tissue distribution, highest levels found in pheochromocytoma and adrenal medulla. Also found in lung, ventricle and kidney tissues.

It localises to the secreted. Adrenomedullin/ADM and proadrenomedullin N-20 terminal peptide/PAMP are peptide hormones that act as potent hypotensive and vasodilatator agents. Numerous actions have been reported most related to the physiologic control of fluid and electrolyte homeostasis. In the kidney, ADM is diuretic and natriuretic, and both ADM and PAMP inhibit aldosterone secretion by direct adrenal actions. In pituitary gland, both peptides at physiologically relevant doses inhibit basal ACTH secretion. Both peptides appear to act in brain and pituitary gland to facilitate the loss of plasma volume, actions which complement their hypotensive effects in blood vessels. Its function is as follows. ADM function is mediated by the CALCRL-RAMP2 and CALCRL-RAMP3 receptor complexes with ADM showing the highest potency for the CALCRL-RAMP2 complex. The protein is Pro-adrenomedullin of Homo sapiens (Human).